We begin with the raw amino-acid sequence, 663 residues long: UvrABC system protein B (663 aa).

The span at 1 to 10 shows a compositional bias: basic and acidic residues; sequence MIDKRDDKPF. A disordered region spans residues 1-23; it reads MIDKRDDKPFKLKSKYKPSGDQP. One can recognise a Helicase ATP-binding domain in the interval 31–271; it reads DNIEGGEKAQ…EQSIAKIQAE (241 aa). An ATP-binding site is contributed by 44–51; it reads GATGTGKT. Residues 97 to 120 carry the Beta-hairpin motif; the sequence is YYDYYQPEAYVPSSDTYIEKDSSV. The region spanning 435-601 is the Helicase C-terminal domain; the sequence is QIDDLLGEIN…TIKKDIRGLI (167 aa). The UVR domain maps to 627 to 662; that stretch reads KEAINALQKQMQEAAELLDFELAAQMRDLILELKLM.

This sequence belongs to the UvrB family. As to quaternary structure, forms a heterotetramer with UvrA during the search for lesions. Interacts with UvrC in an incision complex.

It localises to the cytoplasm. Functionally, the UvrABC repair system catalyzes the recognition and processing of DNA lesions. A damage recognition complex composed of 2 UvrA and 2 UvrB subunits scans DNA for abnormalities. Upon binding of the UvrA(2)B(2) complex to a putative damaged site, the DNA wraps around one UvrB monomer. DNA wrap is dependent on ATP binding by UvrB and probably causes local melting of the DNA helix, facilitating insertion of UvrB beta-hairpin between the DNA strands. Then UvrB probes one DNA strand for the presence of a lesion. If a lesion is found the UvrA subunits dissociate and the UvrB-DNA preincision complex is formed. This complex is subsequently bound by UvrC and the second UvrB is released. If no lesion is found, the DNA wraps around the other UvrB subunit that will check the other stand for damage. The chain is UvrABC system protein B from Streptococcus pyogenes serotype M5 (strain Manfredo).